We begin with the raw amino-acid sequence, 258 residues long: UPF0246 protein HS_0482 (258 aa).

The protein belongs to the UPF0246 family.

This is UPF0246 protein HS_0482 from Histophilus somni (strain 129Pt) (Haemophilus somnus).